Here is a 246-residue protein sequence, read N- to C-terminus: Transmembrane and ubiquitin-like domain-containing protein 1 (246 aa).

Residues 2 to 30 (ALIEGVGDEVTILFSALACLLVLALAWVS) are required to release iHOPS from membranes. A helical membrane pass occupies residues 11-31 (VTILFSALACLLVLALAWVST). The disordered stretch occupies residues 35–102 (EGADPLPQPS…PPPPDSPQEP (68 aa)). Over residues 40–50 (LPQPSGTPTPT) the composition is skewed to pro residues. A phosphothreonine mark is found at T71 and T92. A phosphoserine mark is found at S98 and S127. Residues 103–176 (LVLRLKFLND…LHCHVSTRVG (74 aa)) enclose the Ubiquitin-like domain. A run of 2 helical transmembrane segments spans residues 195-215 (VGSL…YCQI) and 221-241 (FPLT…LLAF).

In terms of assembly, interacts with EEF1A1, GRIA2, GRIP1, CAMLG, TUBG1. Interacts with NPM1 and CDKN2A; TMUB1 can enhance interaction between NPM1 and CDKN2A and is proposed to bridge the proteins; proposed to be mediated by iHOPS. Interacts with ERLIN2 and AMFR; TMUB1 promotes the interaction of ERLIN2 with AMFR. Post-translationally, processed by regulated intramembrane proteolysis (RIP) in the N-terminus to release iHOPS from membranes.

The protein resides in the membrane. It localises to the postsynaptic cell membrane. The protein localises to the recycling endosome. It is found in the cytoplasm. Its subcellular location is the nucleus. The protein resides in the nucleolus. It localises to the cytoskeleton. The protein localises to the microtubule organizing center. It is found in the centrosome. In terms of biological role, involved in sterol-regulated ubiquitination and degradation of HMG-CoA reductase HMGCR. Involved in positive regulation of AMPA-selective glutamate receptor GRIA2 recycling to the cell surface. Acts as negative regulator of hepatocyte growth during regeneration. Functionally, may contribute to the regulation of translation during cell-cycle progression. May contribute to the regulation of cell proliferation. May be involved in centrosome assembly. Modulates stabilization and nucleolar localization of tumor suppressor CDKN2A and enhances association between CDKN2A and NPM1. The polypeptide is Transmembrane and ubiquitin-like domain-containing protein 1 (TMUB1) (Bos taurus (Bovine)).